The primary structure comprises 228 residues: LexA repressor (228 aa).

The segment at residues 26 to 46 is a DNA-binding region (H-T-H motif); that stretch reads FDEMKEALDLRSKSGIHRLIT. Catalysis depends on for autocatalytic cleavage activity residues Ser149 and Lys187.

Belongs to the peptidase S24 family. As to quaternary structure, homodimer.

It catalyses the reaction Hydrolysis of Ala-|-Gly bond in repressor LexA.. Its function is as follows. Represses a number of genes involved in the response to DNA damage (SOS response), including recA and lexA. In the presence of single-stranded DNA, RecA interacts with LexA causing an autocatalytic cleavage which disrupts the DNA-binding part of LexA, leading to derepression of the SOS regulon and eventually DNA repair. The chain is LexA repressor from Jannaschia sp. (strain CCS1).